Reading from the N-terminus, the 483-residue chain is Probable Xaa-Pro aminopeptidase MCYG_06503 (483 aa).

D233, D244, E409, and E453 together coordinate Mn(2+).

The protein belongs to the peptidase M24B family. Mn(2+) serves as cofactor.

The catalysed reaction is Release of any N-terminal amino acid, including proline, that is linked to proline, even from a dipeptide or tripeptide.. Catalyzes the removal of a penultimate prolyl residue from the N-termini of peptides. The sequence is that of Probable Xaa-Pro aminopeptidase MCYG_06503 from Arthroderma otae (strain ATCC MYA-4605 / CBS 113480) (Microsporum canis).